The chain runs to 425 residues: 26S proteasome regulatory subunit 7 (425 aa).

208 to 215 (GPPGTGKT) lines the ATP pocket.

The protein belongs to the AAA ATPase family.

The protein resides in the cytoplasm. The protein localises to the nucleus. Its function is as follows. The 26S proteasome is involved in the ATP-dependent degradation of ubiquitinated proteins. The regulatory (or ATPase) complex confers ATP dependency and substrate specificity to the 26S complex. This chain is 26S proteasome regulatory subunit 7 (RPT1), found in Prunus persica (Peach).